Here is a 229-residue protein sequence, read N- to C-terminus: Potassium/proton antiporter CemA (229 aa).

A run of 3 helical transmembrane segments spans residues 7-27 (FTPLLYFASIVFLPWWISLSF), 114-134 (IISFVILSGYSIFGNEELVIL), and 190-210 (ISGLVSTFPVILDTLLKYWIF).

It belongs to the CemA family.

It localises to the plastid. The protein resides in the chloroplast inner membrane. The enzyme catalyses K(+)(in) + H(+)(out) = K(+)(out) + H(+)(in). Functionally, contributes to K(+)/H(+) antiport activity by supporting proton efflux to control proton extrusion and homeostasis in chloroplasts in a light-dependent manner to modulate photosynthesis. Prevents excessive induction of non-photochemical quenching (NPQ) under continuous-light conditions. Indirectly promotes efficient inorganic carbon uptake into chloroplasts. In Jasminum nudiflorum (Winter jasmine), this protein is Potassium/proton antiporter CemA.